Consider the following 377-residue polypeptide: Succinyl-diaminopimelate desuccinylase (377 aa).

H66 is a binding site for Zn(2+). D68 is a catalytic residue. D99 is a binding site for Zn(2+). The active-site Proton acceptor is E133. 3 residues coordinate Zn(2+): E134, E162, and H348.

The protein belongs to the peptidase M20A family. DapE subfamily. Homodimer. Zn(2+) serves as cofactor. Co(2+) is required as a cofactor.

The enzyme catalyses N-succinyl-(2S,6S)-2,6-diaminopimelate + H2O = (2S,6S)-2,6-diaminopimelate + succinate. Its pathway is amino-acid biosynthesis; L-lysine biosynthesis via DAP pathway; LL-2,6-diaminopimelate from (S)-tetrahydrodipicolinate (succinylase route): step 3/3. Its function is as follows. Catalyzes the hydrolysis of N-succinyl-L,L-diaminopimelic acid (SDAP), forming succinate and LL-2,6-diaminopimelate (DAP), an intermediate involved in the bacterial biosynthesis of lysine and meso-diaminopimelic acid, an essential component of bacterial cell walls. The sequence is that of Succinyl-diaminopimelate desuccinylase from Chromobacterium violaceum (strain ATCC 12472 / DSM 30191 / JCM 1249 / CCUG 213 / NBRC 12614 / NCIMB 9131 / NCTC 9757 / MK).